Consider the following 137-residue polypeptide: Small ribosomal subunit protein uS11A (137 aa).

S2 carries the N-acetylserine modification. The disordered stretch occupies residues 117–137; it reads DVTPVPSDSTRKKGGRRGRRL. Residues 128–137 are compositionally biased toward basic residues; sequence KKGGRRGRRL.

The protein belongs to the universal ribosomal protein uS11 family. In terms of assembly, component of the small ribosomal subunit (SSU). Mature yeast ribosomes consist of a small (40S) and a large (60S) subunit. The 40S small subunit contains 1 molecule of ribosomal RNA (18S rRNA) and 33 different proteins (encoded by 57 genes). The large 60S subunit contains 3 rRNA molecules (25S, 5.8S and 5S rRNA) and 46 different proteins (encoded by 81 genes). uS11 interacts with eS1 forming part of the mRNA exit tunnel. uS11 interacts with snoRNA U3. uS11 interacts with MPP10. Component of the ribosomal small subunit (SSU) processome composed of at least 40 protein subunits and snoRNA U3. Post-translationally, N-terminally acetylated by acetyltransferase NatA.

Its subcellular location is the cytoplasm. The protein localises to the nucleus. It localises to the nucleolus. Component of the ribosome, a large ribonucleoprotein complex responsible for the synthesis of proteins in the cell. The small ribosomal subunit (SSU) binds messenger RNAs (mRNAs) and translates the encoded message by selecting cognate aminoacyl-transfer RNA (tRNA) molecules. The large subunit (LSU) contains the ribosomal catalytic site termed the peptidyl transferase center (PTC), which catalyzes the formation of peptide bonds, thereby polymerizing the amino acids delivered by tRNAs into a polypeptide chain. The nascent polypeptides leave the ribosome through a tunnel in the LSU and interact with protein factors that function in enzymatic processing, targeting, and the membrane insertion of nascent chains at the exit of the ribosomal tunnel. uS11 is involved in nucleolar processing of pre-18S ribosomal RNA and ribosome assembly. In Saccharomyces cerevisiae (strain ATCC 204508 / S288c) (Baker's yeast), this protein is Small ribosomal subunit protein uS11A.